The chain runs to 529 residues: MKCLEGLHLQQRPSKFSVSLAPEEGLVCAFQLEEEKENEDECVCSDQAPEVKEEGCGLGDPAIVSAFQNTQVPQQRGLHSSHRVKVSGALGMSSASLHFMWQSVFPRASSPAHHFGPQQPSPDPFLFYSPLTPWPPKLSLPSHLTQLHPQHQQILQQQQRWRRRRSPTARSVPAQKPWSREPAASDAYANLMTRKEKDWVIRVQMVQLQSENPRLDDYYYQKYYQKLEKRQADKELLGQKTRAESLKLVTPYIQKPEVYESVVRIEGSLGQVAVSTCFSPRRAIDAVSHGTQEQDTGAASSQRLRVLSQIEKMFLQLLKIEEGQNDGLPQLYHTREQSSQVEKLFQALKTQEQNNLEEAADNLLQVLSVRKGKVLVARLLPFLPPDQAVSLLLYITYHLPLLIQRDMADQGLHMLFKPLGKYISHLTFHQLLHAMQGLMLLSPGSSERPVSVVLQNQFGISLLYALLSHGEQLVSLDPSLRSSSDCATWTDLVILIAWEIAQLPAASLAEPLAFPRNLLPCSAITWTSN.

The tract at residues 153 to 183 (QILQQQQRWRRRRSPTARSVPAQKPWSREPA) is disordered.

This sequence belongs to the PAT1 family. In terms of assembly, interacts with LSM1.

The protein localises to the cytoplasm. It localises to the nucleus. Functionally, RNA-binding protein that acts as a translational repressor. In Mus musculus (Mouse), this protein is Protein PAT1 homolog 2 (Patl2).